The chain runs to 257 residues: Na(+)-translocating NADH-quinone reductase subunit C (257 aa).

Residues 13 to 33 (LTVVVLLSLICSLIVASAAVL) form a helical membrane-spanning segment. Thr224 bears the FMN phosphoryl threonine mark.

It belongs to the NqrC family. Composed of six subunits; NqrA, NqrB, NqrC, NqrD, NqrE and NqrF. FMN serves as cofactor.

It is found in the cell inner membrane. It catalyses the reaction a ubiquinone + n Na(+)(in) + NADH + H(+) = a ubiquinol + n Na(+)(out) + NAD(+). NQR complex catalyzes the reduction of ubiquinone-1 to ubiquinol by two successive reactions, coupled with the transport of Na(+) ions from the cytoplasm to the periplasm. NqrA to NqrE are probably involved in the second step, the conversion of ubisemiquinone to ubiquinol. In Haemophilus ducreyi (strain 35000HP / ATCC 700724), this protein is Na(+)-translocating NADH-quinone reductase subunit C.